The chain runs to 211 residues: Mediator of RNA polymerase II transcription subunit 20 (211 aa).

The protein belongs to the Mediator complex subunit 20 family. As to quaternary structure, component of the Mediator complex.

It is found in the nucleus. In terms of biological role, component of the Mediator complex, a coactivator involved in the regulated transcription of nearly all RNA polymerase II-dependent genes. Mediator functions as a bridge to convey information from gene-specific regulatory proteins to the basal RNA polymerase II transcription machinery. Mediator is recruited to promoters by direct interactions with regulatory proteins and serves as a scaffold for the assembly of a functional preinitiation complex with RNA polymerase II and the general transcription factors. The sequence is that of Mediator of RNA polymerase II transcription subunit 20 (MED20) from Gallus gallus (Chicken).